The primary structure comprises 100 residues: Large ribosomal subunit protein eL30 (100 aa).

This sequence belongs to the eukaryotic ribosomal protein eL30 family.

The protein is Large ribosomal subunit protein eL30 of Methanococcus maripaludis (strain DSM 14266 / JCM 13030 / NBRC 101832 / S2 / LL).